The chain runs to 1193 residues: Chloride channel protein 2 (1193 aa).

Residues 1–168 (MVYFGDRQRD…WIWRHTVARL (168 aa)) lie on the Cytoplasmic side of the membrane. The segment at 76–97 (SHAFYPCPPPAENARDSDSSDD) is disordered. Helical transmembrane passes span 169-204 (GEDW…IWLY) and 213-236 (VQYI…VHLI). A Selectivity filter part_1 motif is present at residues 242–246 (GSGIP). Position 243 (Ser-243) interacts with chloride. The segment at residues 245–252 (IPEMKTIL) is an intramembrane region (helical). The next 2 helical transmembrane spans lie at 261–279 (LTFK…TLGS) and 286–304 (EGPF…SKLV). A Selectivity filter part_2 motif is present at residues 284 to 288 (GKEGP). 2 intramembrane regions (helical) span residues 320–332 (MLAA…VGAC) and 336–344 (PVGGVLFSI). The next 5 helical transmembrane spans lie at 356 to 373 (YWRG…FRLL), 402 to 430 (LFVF…VLFM), 439 to 458 (FLQK…VSSI), 511 to 530 (FGNL…IAST), and 536 to 555 (GMFI…VGEF). The short motif at 536–540 (GMFIP) is the Selectivity filter part_3 element. Position 538 (Phe-538) interacts with chloride. Residues 576-590 (GGYAVVGAAAFSGSV) constitute an intramembrane region (helical). The segment at residues 591–592 (TH) is an intramembrane region (note=Loop between two helices). An intramembrane region (helical) is located at residues 593–604 (TVSVAVIIFEMT). The segment at residues 605-609 (GQITH) is an intramembrane region (note=Loop between two helices). Residues 610–626 (VVPVMIAVLVANAVAAL) form a helical membrane-spanning segment. The Cytoplasmic portion of the chain corresponds to 627–1193 (LQPSIYDSII…KSNTENGNHA (567 aa)). Tyr-632 serves as a coordination point for chloride. Positions 663 to 723 (MVRDVKYIWH…KMIEKHIGRE (61 aa)) constitute a CBS 1 domain. Disordered stretches follow at residues 848–884 (TLQD…VSKK), 1103–1122 (NSFV…AVEK), and 1159–1193 (IKHT…GNHA). Residues 1048 to 1105 (IDPSPFQLVERTSILKVHSLFSMVGINHAYVTKIGRLVGVVGLKELRKAIEDINSNSF) form the CBS 2 domain. Positions 1165–1193 (GTVSLTMPPQESKQSPSADKSNTENGNHA) are enriched in polar residues.

This sequence belongs to the chloride channel (TC 2.A.49) family. In terms of tissue distribution, at embryonic stages 13-16, expressed in a subset of the midline cells of the midline primordium and in all of the midline glia. Expressed along the Z-line of the sarcomere in larval longitudinal muscles.

It localises to the membrane. Its function is as follows. Voltage-gated chloride channel. Chloride channels have several functions including the regulation of cell volume; membrane potential stabilization, signal transduction and transepithelial transport. In Drosophila melanogaster (Fruit fly), this protein is Chloride channel protein 2 (ClC-a).